A 159-amino-acid polypeptide reads, in one-letter code: 2-C-methyl-D-erythritol 2,4-cyclodiphosphate synthase (159 aa).

A divalent metal cation-binding residues include aspartate 8 and histidine 10. 4-CDP-2-C-methyl-D-erythritol 2-phosphate contacts are provided by residues 8–10 (DVH) and 34–35 (HS). An a divalent metal cation-binding site is contributed by histidine 42. 4-CDP-2-C-methyl-D-erythritol 2-phosphate is bound by residues 56-58 (DIG), 61-65 (FPDTD), 100-106 (AQAPKML), 132-135 (TTTE), phenylalanine 139, and arginine 142.

The protein belongs to the IspF family. As to quaternary structure, homotrimer. A divalent metal cation is required as a cofactor.

It carries out the reaction 4-CDP-2-C-methyl-D-erythritol 2-phosphate = 2-C-methyl-D-erythritol 2,4-cyclic diphosphate + CMP. Its pathway is isoprenoid biosynthesis; isopentenyl diphosphate biosynthesis via DXP pathway; isopentenyl diphosphate from 1-deoxy-D-xylulose 5-phosphate: step 4/6. In terms of biological role, involved in the biosynthesis of isopentenyl diphosphate (IPP) and dimethylallyl diphosphate (DMAPP), two major building blocks of isoprenoid compounds. Catalyzes the conversion of 4-diphosphocytidyl-2-C-methyl-D-erythritol 2-phosphate (CDP-ME2P) to 2-C-methyl-D-erythritol 2,4-cyclodiphosphate (ME-CPP) with a corresponding release of cytidine 5-monophosphate (CMP). This Salmonella choleraesuis (strain SC-B67) protein is 2-C-methyl-D-erythritol 2,4-cyclodiphosphate synthase.